Reading from the N-terminus, the 1730-residue chain is SH3 and multiple ankyrin repeat domains protein 3 (1730 aa).

The intramolecular interaction with the ANK repeats stretch occupies residues 1–75 (MDGPGASAVV…KFLDEERLLQ (75 aa)). Tyr122 carries the phosphotyrosine modification. 6 ANK repeats span residues 148–178 (SGECPLSLAAQLDNATDLLKVLRNGGAHLDF), 182–211 (DGLTAVHCATRQRNAGALTTLLDLGASPDY), 215–245 (RGLTPLYHSALGGGDALCCELLLHDHAQLGT), 249–278 (NGWQEIHQACRFGHVQHLEHLLFYGANMGA), 282–311 (SGNTALHICALYNQESCARVLLFRGANKDV), and 315–345 (NSQTAFQVAIIAGNFELAEVIKTHKDSDVVP). Positions 354 to 466 (KRRRLAGPSG…PPPRGPKRKL (113 aa)) are disordered. Phosphoserine occurs at positions 373, 375, 387, and 394. Basic and acidic residues predominate over residues 404–415 (LQEEKDRDRDGE). Residues 444 to 460 (APGPGPASPAPPAPPPR) are compositionally biased toward pro residues. The SH3 domain occupies 470-529 (VPGRKFIAVKAHSPQGEGEIPLHRGEAVKVLSIGEGGFWEGTVKGRTGWFPADCVEEVQM). Phosphoserine is present on Ser482. Position 555 is a phosphotyrosine (Tyr555). The 95-residue stretch at 570–664 (VAILQKRDHE…RLVMKVVSVT (95 aa)) folds into the PDZ domain. Residues 664–688 (TRKPEEDGARRRAPPPPKRAPSTTL) form a disordered region. Positions 677–684 (PPPPKRAP) are required for interaction with ABI1. Residues Ser694, Ser781, Ser790, and Ser801 each carry the phosphoserine modification. Disordered regions lie at residues 760–1460 (QGLP…AAGP) and 1475–1524 (GDPV…SLLD). Pro residues predominate over residues 812–844 (IPPPPQTAPPPPPAPYYFDSGPPPTFSPPPPPG). The segment covering 857 to 869 (GLEARLGAGAAGL) has biased composition (low complexity). Phosphoserine is present on residues Ser890 and Ser897. Thr912 carries the post-translational modification Phosphothreonine. Tyr930 carries the phosphotyrosine modification. At Arg965 the chain carries Asymmetric dimethylarginine. Position 995 is a phosphoserine (Ser995). The segment covering 1016-1026 (VKERRLEERRR) has biased composition (basic and acidic residues). Low complexity predominate over residues 1078–1092 (LKPLVGGPSLGPSGS). The segment covering 1122-1131 (SQTPSRSPTP) has biased composition (polar residues). Phosphothreonine is present on Thr1130. Phosphoserine occurs at positions 1134, 1159, 1163, and 1166. Over residues 1174–1194 (ARREAEKPPREERKSPEDKKS) the composition is skewed to basic and acidic residues. Phosphothreonine is present on Thr1234. The span at 1235–1250 (PELAPAPMQAAAVAEP) shows a compositional bias: low complexity. Pro residues-rich tracts occupy residues 1251–1261 (MPSPRAQPPGS) and 1321–1333 (TPPPGPGPLPTTV). Phosphoserine is present on Ser1253. Residues 1360-1370 (ADTRSSSDPHL) show a composition bias toward basic and acidic residues. A compositionally biased stretch (low complexity) spans 1371–1392 (ETTSTISTVSSMSTLSSESGEL). Residues 1410 to 1416 (PPVPPKP) carry the SH3-binding motif. Ser1420 is modified (phosphoserine). Residues 1494–1514 (ISELSSRLQQLNKDTRSLGEE) are a coiled coil. Residues 1495-1505 (SELSSRLQQLN) show a composition bias toward polar residues. 4 positions are modified to phosphoserine: Ser1510, Ser1521, Ser1529, and Ser1539. Disordered stretches follow at residues 1546 to 1584 (ISAQRSPGGPGGGASYSVRPSGRYPVARRAPSPVKPASL) and 1627 to 1663 (VRSVSARSRSPSPSPLPSPSPGSGPSAGPRRPFQQKP). The segment covering 1627 to 1637 (VRSVSARSRSP) has biased composition (low complexity). Residues Ser1634, Ser1636, and Ser1638 each carry the phosphoserine modification. Over residues 1638–1648 (SPSPLPSPSPG) the composition is skewed to pro residues. The segment covering 1649–1658 (SGPSAGPRRP) has biased composition (low complexity). In terms of domain architecture, SAM spans 1667-1730 (WSKFDVGDWL…ERALRQLDGS (64 aa)).

It belongs to the SHANK family. In terms of assembly, may homomultimerize via its SAM domain. Interacts with BAIAP2, DBNL and SLC17A7/VGLUT1. Interacts with DLGAP1/GKAP, GRM1/MGLUR1, GRM5/MGLUR5 and LZTS3 C-termini via its PDZ domain. Interacts with ABI1, HOMER1, HOMER2, HOMER3 and CTTN/cortactin SH3 domain. Is part of a complex with DLG4/PSD-95 and DLGAP1/GKAP. Interacts (via PDZ domain) with the GRIA1 subunit of the AMPA receptor (via PDZ-binding motif). Interacts with WASF1 and CYFIP2; the interactions mediate the association of SHANK3 with the WAVE1 complex. Interacts with ARPC2; the interaction probably mediates the association of SHANK3 with the Arp2/3 complex. Interacts (via ANK repeats) with SHARPIN and SPTAN1. Interacts (via PDZ domain) with ARHGAP44 (probably via PDZ-binding motif); the interaction takes place in dendritic spines and promotes GRIA1 exocytosis. Interacts with CAMK2A. Interacts with DIP2A. Interacts with ADGRL3. In brain, highly expressed in striatum, thalamus, hippocampus and granule cells of the cerebellum.

The protein resides in the cytoplasm. It localises to the synapse. Its subcellular location is the postsynaptic density. The protein localises to the cell projection. It is found in the dendritic spine. Major scaffold postsynaptic density protein which interacts with multiple proteins and complexes to orchestrate the dendritic spine and synapse formation, maturation and maintenance. Interconnects receptors of the postsynaptic membrane including NMDA-type and metabotropic glutamate receptors via complexes with GKAP/PSD-95 and HOMER, respectively, and the actin-based cytoskeleton. Plays a role in the structural and functional organization of the dendritic spine and synaptic junction through the interaction with Arp2/3 and WAVE1 complex as well as the promotion of the F-actin clusters. By way of this control of actin dynamics, participates in the regulation of developing neurons growth cone motility and the NMDA receptor-signaling. Also modulates GRIA1 exocytosis and GRM5/MGLUR5 expression and signaling to control the AMPA and metabotropic glutamate receptor-mediated synaptic transmission and plasticity. May be required at an early stage of synapse formation and be inhibited by IGF1 to promote synapse maturation. The sequence is that of SH3 and multiple ankyrin repeat domains protein 3 (Shank3) from Mus musculus (Mouse).